A 145-amino-acid chain; its full sequence is Large ribosomal subunit protein uL15 (145 aa).

Positions 1 to 18 (MKLHELKYTEGSKKDVTR) are enriched in basic and acidic residues. Positions 1-51 (MKLHELKYTEGSKKDVTRVGRGMASGKGKTSTRGHKGQNSRSGGGVRVGFE) are disordered. The span at 42-51 (SGGGVRVGFE) shows a compositional bias: gly residues.

The protein belongs to the universal ribosomal protein uL15 family. As to quaternary structure, part of the 50S ribosomal subunit.

In terms of biological role, binds to the 23S rRNA. The polypeptide is Large ribosomal subunit protein uL15 (Mesoplasma florum (strain ATCC 33453 / NBRC 100688 / NCTC 11704 / L1) (Acholeplasma florum)).